A 327-amino-acid chain; its full sequence is Mitochondrial coenzyme A transporter SLC25A42 (327 aa).

Solcar repeat units follow at residues Lys34 to Leu120, Leu132 to Leu217, and Pro227 to Leu315. 6 consecutive transmembrane segments (helical) span residues Val36–Pro56, Leu92–Cys112, Leu138–Val158, Gly192–Phe209, Leu233–Val253, and Val296–Leu316.

It belongs to the mitochondrial carrier (TC 2.A.29) family.

It localises to the mitochondrion inner membrane. It carries out the reaction ADP(out) + CoA(in) = ADP(in) + CoA(out). It catalyses the reaction 3'-dephospho-CoA(in) + ADP(out) = 3'-dephospho-CoA(out) + ADP(in). The catalysed reaction is adenosine 3',5'-bisphosphate(in) + ADP(out) = adenosine 3',5'-bisphosphate(out) + ADP(in). The enzyme catalyses AMP(in) + ADP(out) = AMP(out) + ADP(in). It carries out the reaction dADP(in) + ADP(out) = dADP(out) + ADP(in). It catalyses the reaction ADP(in) + ATP(out) = ADP(out) + ATP(in). In terms of biological role, mitochondrial carrier mediating the transport of coenzyme A (CoA) in mitochondria in exchange for intramitochondrial (deoxy)adenine nucleotides and adenosine 3',5'-diphosphate. The protein is Mitochondrial coenzyme A transporter SLC25A42 (slc25a42) of Xenopus laevis (African clawed frog).